A 182-amino-acid chain; its full sequence is ATP synthase subunit b (182 aa).

A helical membrane pass occupies residues 25 to 45 (VVLAGFAVLFYIVVKFVVPMF).

The protein belongs to the ATPase B chain family. F-type ATPases have 2 components, F(1) - the catalytic core - and F(0) - the membrane proton channel. F(1) has five subunits: alpha(3), beta(3), gamma(1), delta(1), epsilon(1). F(0) has three main subunits: a(1), b(2) and c(10-14). The alpha and beta chains form an alternating ring which encloses part of the gamma chain. F(1) is attached to F(0) by a central stalk formed by the gamma and epsilon chains, while a peripheral stalk is formed by the delta and b chains.

It localises to the cell membrane. Functionally, f(1)F(0) ATP synthase produces ATP from ADP in the presence of a proton or sodium gradient. F-type ATPases consist of two structural domains, F(1) containing the extramembraneous catalytic core and F(0) containing the membrane proton channel, linked together by a central stalk and a peripheral stalk. During catalysis, ATP synthesis in the catalytic domain of F(1) is coupled via a rotary mechanism of the central stalk subunits to proton translocation. Its function is as follows. Component of the F(0) channel, it forms part of the peripheral stalk, linking F(1) to F(0). The sequence is that of ATP synthase subunit b from Arthrobacter sp. (strain FB24).